The primary structure comprises 311 residues: Methionyl-tRNA formyltransferase (311 aa).

110–113 (SLLP) contacts (6S)-5,6,7,8-tetrahydrofolate.

Belongs to the Fmt family.

The catalysed reaction is L-methionyl-tRNA(fMet) + (6R)-10-formyltetrahydrofolate = N-formyl-L-methionyl-tRNA(fMet) + (6S)-5,6,7,8-tetrahydrofolate + H(+). Functionally, attaches a formyl group to the free amino group of methionyl-tRNA(fMet). The formyl group appears to play a dual role in the initiator identity of N-formylmethionyl-tRNA by promoting its recognition by IF2 and preventing the misappropriation of this tRNA by the elongation apparatus. This Streptococcus pneumoniae (strain Taiwan19F-14) protein is Methionyl-tRNA formyltransferase.